The chain runs to 333 residues: Flotillin-like protein FloA (333 aa).

Residues isoleucine 10–phenylalanine 30 form a helical membrane-spanning segment.

The protein belongs to the flotillin-like FloA family. In terms of assembly, homooligomerizes.

It is found in the cell membrane. The protein resides in the membrane raft. Functionally, found in functional membrane microdomains (FMM) that may be equivalent to eukaryotic membrane rafts. FMMs are highly dynamic and increase in number as cells age. Flotillins are thought to be important factors in membrane fluidity. The protein is Flotillin-like protein FloA of Bacteroides fragilis (strain ATCC 25285 / DSM 2151 / CCUG 4856 / JCM 11019 / LMG 10263 / NCTC 9343 / Onslow / VPI 2553 / EN-2).